The primary structure comprises 333 residues: 5-formaminoimidazole-4-carboxamide-1-(beta)-D-ribofuranosyl 5'-monophosphate synthetase (333 aa).

The 5-amino-1-(5-phospho-beta-D-ribosyl)imidazole-4-carboxamide site is built by His-10 and Ser-74. The ATP-grasp domain occupies Arg-95 to Asn-324. ATP is bound by residues Val-125–Tyr-185 and Glu-207. Asn-230 contacts 5-amino-1-(5-phospho-beta-D-ribosyl)imidazole-4-carboxamide. 2 residues coordinate Mg(2+): Glu-269 and Glu-282.

The protein belongs to the phosphohexose mutase family. Requires Mg(2+) as cofactor. Mn(2+) serves as cofactor.

It carries out the reaction 5-amino-1-(5-phospho-beta-D-ribosyl)imidazole-4-carboxamide + formate + ATP = 5-formamido-1-(5-phospho-D-ribosyl)imidazole-4-carboxamide + ADP + phosphate. It participates in purine metabolism; IMP biosynthesis via de novo pathway; 5-formamido-1-(5-phospho-D-ribosyl)imidazole-4-carboxamide from 5-amino-1-(5-phospho-D-ribosyl)imidazole-4-carboxamide (formate route): step 1/1. Its function is as follows. Catalyzes the ATP- and formate-dependent formylation of 5-aminoimidazole-4-carboxamide-1-beta-d-ribofuranosyl 5'-monophosphate (AICAR) to 5-formaminoimidazole-4-carboxamide-1-beta-d-ribofuranosyl 5'-monophosphate (FAICAR) in the absence of folates. The polypeptide is 5-formaminoimidazole-4-carboxamide-1-(beta)-D-ribofuranosyl 5'-monophosphate synthetase (Sulfolobus acidocaldarius (strain ATCC 33909 / DSM 639 / JCM 8929 / NBRC 15157 / NCIMB 11770)).